The chain runs to 381 residues: MSEYKYCVGIMSGTSLDGIDVALCKIRGSGLDTDVKLIDCQTYPYPTNLLCDIKKSLDLSTSNAQLLCSLNFKLGIEYANAVKKLVAANNLNLKDIAFIASHGQTIYHQANNERGFIKSSLQLGDAATIAYECQTTVVSNFRAGDIAAGGDGAPLVPYVDYLLYRDKDKSRALHNIGGIANTTIIPKNANIDDIYAFDTGPGNMMINRSMEVLFNQDYDKGGDTAAAGIVIVDMLQELLDNPYLKQKPPKSTGRELFGINYTDKIIAKYKQNKPEDIVHTLTIFTAQSIVRAYKDFVFNKNKLDQIIFTGGGAYNKFLIKTISDLLDVEVLTFEDIGESSDAKEAIAFAVLGNETLNKSYNNIPSATGAKSRVILGQINFF.

13–20 lines the ATP pocket; sequence GTSLDGID.

Belongs to the anhydro-N-acetylmuramic acid kinase family.

The enzyme catalyses 1,6-anhydro-N-acetyl-beta-muramate + ATP + H2O = N-acetyl-D-muramate 6-phosphate + ADP + H(+). Its pathway is amino-sugar metabolism; 1,6-anhydro-N-acetylmuramate degradation. The protein operates within cell wall biogenesis; peptidoglycan recycling. Catalyzes the specific phosphorylation of 1,6-anhydro-N-acetylmuramic acid (anhMurNAc) with the simultaneous cleavage of the 1,6-anhydro ring, generating MurNAc-6-P. Is required for the utilization of anhMurNAc either imported from the medium or derived from its own cell wall murein, and thus plays a role in cell wall recycling. The protein is Anhydro-N-acetylmuramic acid kinase of Francisella tularensis subsp. novicida (strain U112).